We begin with the raw amino-acid sequence, 367 residues long: tRNA/tmRNA (uracil-C(5))-methyltransferase (367 aa).

S-adenosyl-L-methionine contacts are provided by glutamine 190, tyrosine 218, asparagine 223, glutamate 239, and aspartate 299. Residue cysteine 324 is the Nucleophile of the active site. Residue glutamate 358 is the Proton acceptor of the active site.

This sequence belongs to the class I-like SAM-binding methyltransferase superfamily. RNA M5U methyltransferase family. TrmA subfamily.

The enzyme catalyses uridine(54) in tRNA + S-adenosyl-L-methionine = 5-methyluridine(54) in tRNA + S-adenosyl-L-homocysteine + H(+). It catalyses the reaction uridine(341) in tmRNA + S-adenosyl-L-methionine = 5-methyluridine(341) in tmRNA + S-adenosyl-L-homocysteine + H(+). Functionally, dual-specificity methyltransferase that catalyzes the formation of 5-methyluridine at position 54 (m5U54) in all tRNAs, and that of position 341 (m5U341) in tmRNA (transfer-mRNA). The polypeptide is tRNA/tmRNA (uracil-C(5))-methyltransferase (Erwinia tasmaniensis (strain DSM 17950 / CFBP 7177 / CIP 109463 / NCPPB 4357 / Et1/99)).